Here is a 263-residue protein sequence, read N- to C-terminus: Stress-response A/B barrel domain-containing protein UP3 (263 aa).

Stress-response A/B barrel domains follow at residues 49 to 142 (IEHI…AVDW) and 158 to 252 (VAKL…VVEF). Positions 261–263 (SSL) match the Peroxisomal targeting signal motif.

Homodimer.

It localises to the peroxisome. Functionally, involved in stress response. In Arabidopsis thaliana (Mouse-ear cress), this protein is Stress-response A/B barrel domain-containing protein UP3.